Reading from the N-terminus, the 459-residue chain is Ribulose bisphosphate carboxylase large chain (459 aa).

Lys4 is modified (N6,N6,N6-trimethyllysine). Asn113 and Thr163 together coordinate substrate. The active-site Proton acceptor is Lys165. Lys167 lines the substrate pocket. Residues Lys191, Asp193, and Glu194 each coordinate Mg(2+). Lys191 is modified (N6-carboxylysine). His284 serves as the catalytic Proton acceptor. Substrate is bound by residues Arg285, His317, and Ser369.

This sequence belongs to the RuBisCO large chain family. Type I subfamily. As to quaternary structure, heterohexadecamer of 8 large chains and 8 small chains; disulfide-linked. The disulfide link is formed within the large subunit homodimers. Mg(2+) is required as a cofactor. The disulfide bond which can form in the large chain dimeric partners within the hexadecamer appears to be associated with oxidative stress and protein turnover.

The protein localises to the plastid. It localises to the chloroplast. The enzyme catalyses 2 (2R)-3-phosphoglycerate + 2 H(+) = D-ribulose 1,5-bisphosphate + CO2 + H2O. It carries out the reaction D-ribulose 1,5-bisphosphate + O2 = 2-phosphoglycolate + (2R)-3-phosphoglycerate + 2 H(+). RuBisCO catalyzes two reactions: the carboxylation of D-ribulose 1,5-bisphosphate, the primary event in carbon dioxide fixation, as well as the oxidative fragmentation of the pentose substrate in the photorespiration process. Both reactions occur simultaneously and in competition at the same active site. The polypeptide is Ribulose bisphosphate carboxylase large chain (Morus alba (White mulberry)).